The primary structure comprises 288 residues: Zinc finger protein ZAT9 (288 aa).

The C2H2-type 1 zinc finger occupies 4–26; the sequence is YKCRVCFKSFVNGKALGGHMRSH. Disordered regions lie at residues 20–82, 101–123, and 189–210; these read GGHM…LTRK, SQLG…DTTT, and GGHR…QRSE. Residues 37 to 52 are compositionally biased toward polar residues; it reads PSQLSYETESDVSSSD. 2 consecutive C2H2-type zinc fingers follow at residues 173–195 and 224–246; these read YKCE…RASH and HECP…KRSH.

Its subcellular location is the nucleus. Probable transcription factor that may be involved in stress responses. The polypeptide is Zinc finger protein ZAT9 (ZAT9) (Arabidopsis thaliana (Mouse-ear cress)).